Here is a 336-residue protein sequence, read N- to C-terminus: Protein-arginine N-acetylglucosaminyltransferase SseK1 (336 aa).

R24 is a glycosylation site (N-beta-linked (GlcNAc) arginine; by autocatalysis). UDP-N-acetyl-alpha-D-glucosamine contacts are provided by residues Q50–F52 and Y74. R152 carries an N-beta-linked (GlcNAc) arginine; by autocatalysis glycan. Positions D223–D225 match the DXD motif motif. UDP-N-acetyl-alpha-D-glucosamine is bound at residue A224–D225. D225 serves as a coordination point for Mn(2+). E255 (proton acceptor) is an active-site residue. The Mn(2+) site is built by N322 and S324. UDP-N-acetyl-alpha-D-glucosamine-binding residues include S324 and S329. A glycan (N-beta-linked (GlcNAc) arginine; by autocatalysis) is linked at R333.

Belongs to the glycosyltransferase NleB family. Requires Mn(2+) as cofactor. Post-translationally, auto-glycosylated: arginine GlcNAcylation is required for activity toward death domain-containing host target proteins.

The protein localises to the secreted. Its subcellular location is the host cytoplasm. The protein resides in the host cytosol. The catalysed reaction is L-arginyl-[protein] + UDP-N-acetyl-alpha-D-glucosamine = N(omega)-(N-acetyl-beta-D-glucosaminyl)-L-arginyl-[protein] + UDP + H(+). Its activity is regulated as follows. Protein-arginine N-acetylglucosaminyltransferase activity is inhibited by 100066N compound (flavone analog) and 102644N compound (a substituted isoxazole). Functionally, protein-arginine N-acetylglucosaminyltransferase effector that disrupts TNF signaling in infected cells, including NF-kappa-B signaling, apoptosis and necroptosis. Acts by catalyzing the transfer of a single N-acetylglucosamine (GlcNAc) to a conserved arginine residue in the death domain of host proteins TRADD and, to a lower extent, FADD: arginine GlcNAcylation prevents homotypic/heterotypic death domain interactions and assembly of the oligomeric TNF-alpha receptor complex, thereby disrupting TNF signaling. Also acts on host proteins without a death domain: catalyzes arginine GlcNAcylation of host GAPDH protein, thereby preventing GAPDH interaction with TRAF2, leading to inhibit NF-kappa-B signaling. Catalyzes GlcNAcylation of host tubulin-folding cofactor TBCB, thereby promoting microtubule stability. Also mediates auto-GlcNAcylation, which is required for activity toward death domain-containing host target proteins. The sequence is that of Protein-arginine N-acetylglucosaminyltransferase SseK1 from Salmonella enteritidis (strain 2009K0958).